The chain runs to 197 residues: 3-isopropylmalate dehydratase small subunit (197 aa).

This sequence belongs to the LeuD family. LeuD type 1 subfamily. Heterodimer of LeuC and LeuD.

The catalysed reaction is (2R,3S)-3-isopropylmalate = (2S)-2-isopropylmalate. The protein operates within amino-acid biosynthesis; L-leucine biosynthesis; L-leucine from 3-methyl-2-oxobutanoate: step 2/4. In terms of biological role, catalyzes the isomerization between 2-isopropylmalate and 3-isopropylmalate, via the formation of 2-isopropylmaleate. This chain is 3-isopropylmalate dehydratase small subunit, found in Azobacteroides pseudotrichonymphae genomovar. CFP2.